Reading from the N-terminus, the 279-residue chain is uncharacterized protein (279 aa).

Positions 2–90 constitute a GIY-YIG domain; it reads KIGYIYAIEN…IRDYGSLNTI (89 aa).

The protein belongs to the IIV-6 019R family.

This is an uncharacterized protein from Acheta domesticus (House cricket).